Reading from the N-terminus, the 217-residue chain is tRNA (guanine-N(7)-)-methyltransferase (217 aa).

Positions 43, 68, 101, and 123 each coordinate S-adenosyl-L-methionine. A substrate-binding site is contributed by Lys127. The tract at residues 129–134 (RHNKRR) is interaction with RNA. Substrate-binding positions include Asp159 and 196–199 (TEYE).

Belongs to the class I-like SAM-binding methyltransferase superfamily. TrmB family.

The enzyme catalyses guanosine(46) in tRNA + S-adenosyl-L-methionine = N(7)-methylguanosine(46) in tRNA + S-adenosyl-L-homocysteine. It functions in the pathway tRNA modification; N(7)-methylguanine-tRNA biosynthesis. In terms of biological role, catalyzes the formation of N(7)-methylguanine at position 46 (m7G46) in tRNA. The chain is tRNA (guanine-N(7)-)-methyltransferase from Clostridium botulinum (strain 657 / Type Ba4).